The sequence spans 78 residues: Acyl carrier protein (78 aa).

In terms of domain architecture, Carrier spans 1 to 76; that stretch reads MSVAEKVKEI…DAISFIEKKK (76 aa). S36 is subject to O-(pantetheine 4'-phosphoryl)serine.

This sequence belongs to the acyl carrier protein (ACP) family. 4'-phosphopantetheine is transferred from CoA to a specific serine of apo-ACP by AcpS. This modification is essential for activity because fatty acids are bound in thioester linkage to the sulfhydryl of the prosthetic group.

Its subcellular location is the cytoplasm. It participates in lipid metabolism; fatty acid biosynthesis. In terms of biological role, carrier of the growing fatty acid chain in fatty acid biosynthesis. The protein is Acyl carrier protein of Solidesulfovibrio magneticus (strain ATCC 700980 / DSM 13731 / RS-1) (Desulfovibrio magneticus).